Reading from the N-terminus, the 450-residue chain is UDP-N-acetylmuramoylalanine--D-glutamate ligase (450 aa).

Residue 118–124 (GSNGKTT) coordinates ATP.

This sequence belongs to the MurCDEF family.

Its subcellular location is the cytoplasm. The enzyme catalyses UDP-N-acetyl-alpha-D-muramoyl-L-alanine + D-glutamate + ATP = UDP-N-acetyl-alpha-D-muramoyl-L-alanyl-D-glutamate + ADP + phosphate + H(+). Its pathway is cell wall biogenesis; peptidoglycan biosynthesis. Functionally, cell wall formation. Catalyzes the addition of glutamate to the nucleotide precursor UDP-N-acetylmuramoyl-L-alanine (UMA). The polypeptide is UDP-N-acetylmuramoylalanine--D-glutamate ligase (Halalkalibacterium halodurans (strain ATCC BAA-125 / DSM 18197 / FERM 7344 / JCM 9153 / C-125) (Bacillus halodurans)).